A 327-amino-acid polypeptide reads, in one-letter code: GMP reductase (327 aa).

Cys-176 serves as the catalytic Thioimidate intermediate. NADP(+) is bound at residue 205–228 (IIADGGIRTHGDIAKSIRFGASMV).

Belongs to the IMPDH/GMPR family. GuaC type 2 subfamily.

The catalysed reaction is IMP + NH4(+) + NADP(+) = GMP + NADPH + 2 H(+). Catalyzes the irreversible NADPH-dependent deamination of GMP to IMP. It functions in the conversion of nucleobase, nucleoside and nucleotide derivatives of G to A nucleotides, and in maintaining the intracellular balance of A and G nucleotides. In Streptococcus pyogenes serotype M5 (strain Manfredo), this protein is GMP reductase.